The sequence spans 251 residues: Pyrroloquinoline-quinone synthase (251 aa).

The protein belongs to the PqqC family.

It catalyses the reaction 6-(2-amino-2-carboxyethyl)-7,8-dioxo-1,2,3,4,7,8-hexahydroquinoline-2,4-dicarboxylate + 3 O2 = pyrroloquinoline quinone + 2 H2O2 + 2 H2O + H(+). It participates in cofactor biosynthesis; pyrroloquinoline quinone biosynthesis. Its function is as follows. Ring cyclization and eight-electron oxidation of 3a-(2-amino-2-carboxyethyl)-4,5-dioxo-4,5,6,7,8,9-hexahydroquinoline-7,9-dicarboxylic-acid to PQQ. The sequence is that of Pyrroloquinoline-quinone synthase from Pseudomonas putida (strain GB-1).